The following is a 484-amino-acid chain: ETS translocation variant 4 (484 aa).

Lys6 participates in a covalent cross-link: Glycyl lysine isopeptide (Lys-Gly) (interchain with G-Cter in SUMO2). Residues 90–115 (SPTTRIKKEPQSPRTDPALSCSRKPP) form a disordered region. Lys96 is covalently cross-linked (Glycyl lysine isopeptide (Lys-Gly) (interchain with G-Cter in SUMO)). Ser101 is modified (phosphoserine). A Glycyl lysine isopeptide (Lys-Gly) (interchain with G-Cter in SUMO2) cross-link involves residue Lys139. Phosphoserine is present on residues Ser140, Ser149, and Ser214. Residues Lys226 and Lys260 each participate in a glycyl lysine isopeptide (Lys-Gly) (interchain with G-Cter in SUMO) cross-link. Residue Lys322 forms a Glycyl lysine isopeptide (Lys-Gly) (interchain with G-Cter in SUMO2) linkage. Positions 341–421 (LQLWQFLVAL…AGERYVYKFV (81 aa)) form a DNA-binding region, ETS.

Belongs to the ETS family. In terms of processing, sumoylated; enhanced upon ERK/MAP kinase pathway activation, it positively regulates the transcriptional activator capacity. Sumoylation at Lys-96 probably requires phosphorylation at Ser-101. Transiently polysumoylated and desumoylated by SENP1. Sumoylation is a prerequisite to polyubiquitination which in turn increases proteasomal-mediated degradation. Probably polyubiquitinated by RNF4 and deubiquitinated by USP2. In terms of tissue distribution, expressed in keratinocytes.

Its subcellular location is the nucleus. Transcriptional activator. May play a role in keratinocyte differentiation. In terms of biological role, (Microbial infection) Binds to the enhancer of the adenovirus E1A gene and acts as a transcriptional activator; the core-binding sequence is 5'-[AC]GGA[AT]GT-3'. The chain is ETS translocation variant 4 (ETV4) from Homo sapiens (Human).